Here is a 203-residue protein sequence, read N- to C-terminus: Inactive ribonuclease-like protein 9 (203 aa).

The N-terminal stretch at 1–25 is a signal peptide; sequence MRTPITTHSLLLLLLLQQLLQPVQL. 3 disulfide bridges follow: Cys-96–Cys-151, Cys-114–Cys-166, and Cys-121–Cys-128. Asn-129 and Asn-141 each carry an N-linked (GlcNAc...) asparagine glycan.

The protein belongs to the pancreatic ribonuclease family.

Its subcellular location is the secreted. Its function is as follows. Does not exhibit any ribonuclease activity. The chain is Inactive ribonuclease-like protein 9 (RNASE9) from Macaca assamensis (Assam macaque).